Reading from the N-terminus, the 337-residue chain is Aspartate carbamoyltransferase catalytic subunit (337 aa).

The carbamoyl phosphate site is built by R57 and T58. K86 is a binding site for L-aspartate. R107, H135, and Q138 together coordinate carbamoyl phosphate. L-aspartate contacts are provided by R172 and R234. Carbamoyl phosphate contacts are provided by L274 and P275.

This sequence belongs to the aspartate/ornithine carbamoyltransferase superfamily. ATCase family. Heterododecamer (2C3:3R2) of six catalytic PyrB chains organized as two trimers (C3), and six regulatory PyrI chains organized as three dimers (R2).

The catalysed reaction is carbamoyl phosphate + L-aspartate = N-carbamoyl-L-aspartate + phosphate + H(+). It participates in pyrimidine metabolism; UMP biosynthesis via de novo pathway; (S)-dihydroorotate from bicarbonate: step 2/3. Catalyzes the condensation of carbamoyl phosphate and aspartate to form carbamoyl aspartate and inorganic phosphate, the committed step in the de novo pyrimidine nucleotide biosynthesis pathway. This chain is Aspartate carbamoyltransferase catalytic subunit, found in Saccharophagus degradans (strain 2-40 / ATCC 43961 / DSM 17024).